The primary structure comprises 113 residues: Major basic nuclear protein 1 (113 aa).

A disordered region spans residues 1–20 (MAPKMKAAMKAMKAPAMKGK).

Its subcellular location is the nucleus. The protein is Major basic nuclear protein 1 (HCc1) of Crypthecodinium cohnii (Dinoflagellate).